The primary structure comprises 304 residues: Glycine--tRNA ligase alpha subunit (304 aa).

Belongs to the class-II aminoacyl-tRNA synthetase family. As to quaternary structure, tetramer of two alpha and two beta subunits.

It localises to the cytoplasm. It carries out the reaction tRNA(Gly) + glycine + ATP = glycyl-tRNA(Gly) + AMP + diphosphate. This is Glycine--tRNA ligase alpha subunit from Yersinia enterocolitica serotype O:8 / biotype 1B (strain NCTC 13174 / 8081).